Reading from the N-terminus, the 157-residue chain is Cyclic pyranopterin monophosphate synthase (157 aa).

Substrate is bound by residues 74–76 (MCH) and 112–113 (ME). The active site involves Asp127.

Belongs to the MoaC family. In terms of assembly, homohexamer; trimer of dimers.

It carries out the reaction (8S)-3',8-cyclo-7,8-dihydroguanosine 5'-triphosphate = cyclic pyranopterin phosphate + diphosphate. It functions in the pathway cofactor biosynthesis; molybdopterin biosynthesis. Functionally, catalyzes the conversion of (8S)-3',8-cyclo-7,8-dihydroguanosine 5'-triphosphate to cyclic pyranopterin monophosphate (cPMP). The chain is Cyclic pyranopterin monophosphate synthase from Campylobacter jejuni subsp. jejuni serotype O:23/36 (strain 81-176).